A 203-amino-acid chain; its full sequence is Ribosome maturation factor RimP (203 aa).

Residues 1 to 21 (MSDSEATTSTDRSESNSTATI) are compositionally biased toward polar residues. The disordered stretch occupies residues 1–23 (MSDSEATTSTDRSESNSTATIHN).

This sequence belongs to the RimP family.

It localises to the cytoplasm. Its function is as follows. Required for maturation of 30S ribosomal subunits. This is Ribosome maturation factor RimP from Paenarthrobacter aurescens (strain TC1).